The chain runs to 495 residues: MKYLLALDQGTTSSWAILFTLEGEVVAVAQRAFAQHYPEPGLVEHDPWEIWESQLWAAKEALRRAGVGPEAVLALGIANQRETTLVWERDTGRPLHPAIVWQDRRTASLCEALRERGLEGLFRARTGLLLDPYFSATKLLWLLERVPGLRERAERGEVCFGTVDTWLLWNLTGGRVHATDPTNASRTLLFHLETLTWDEELLRVLGIPKALLPEVRPSDGDFGETLPGLLGAPIPIRGVLGDQQAALLGQAALGAGEGKCTYGTGAFLLLNTGERPVWAEGGLLTTLAWHLEGKAAYALEGSVFVAGAAVGWLREVGLLGESHEVESLARQVEDAGGVYFVPAFTGLGAPHWDPYARGAILGLTRGTTRAHLARAALEGVAFSVGEVAWAMAGAAGLGLKALKADGGMAQNDLFLEIQADLLGVPVLRPRVTETTALGAAWARGIGAGALSLGDLPALWREEARFLPRMPEARREALYRGWRRAVERAKGWVQEG.

T11 serves as a coordination point for ADP. 3 residues coordinate ATP: T11, T12, and S13. Residue T11 participates in sn-glycerol 3-phosphate binding. Sn-glycerol 3-phosphate contacts are provided by R81, E82, Y133, and D242. Positions 81, 82, 133, 242, and 243 each coordinate glycerol. T264, G307, G407, and N411 together coordinate ADP. Residues T264, G307, and G407 each contribute to the ATP site.

The protein belongs to the FGGY kinase family.

It carries out the reaction glycerol + ATP = sn-glycerol 3-phosphate + ADP + H(+). The protein operates within polyol metabolism; glycerol degradation via glycerol kinase pathway; sn-glycerol 3-phosphate from glycerol: step 1/1. With respect to regulation, inhibited by fructose 1,6-bisphosphate (FBP). In terms of biological role, key enzyme in the regulation of glycerol uptake and metabolism. Catalyzes the phosphorylation of glycerol to yield sn-glycerol 3-phosphate. This is Glycerol kinase from Thermus brockianus.